Here is a 41-residue protein sequence, read N- to C-terminus: Iota-conotoxin-like r11d (41 aa).

Cystine bridges form between Cys2/Cys16, Cys9/Cys19, Cys15/Cys24, and Cys18/Cys35. 4-hydroxyproline is present on Pro8. Position 26 is a 4-hydroxyproline (Pro26).

In terms of processing, position 41 corresponds to a L-threonine, and not a D-threonine as firstly supposed. As to expression, expressed by the venom duct.

It localises to the secreted. Iota-conotoxins bind to voltage-gated sodium channels (Nav) and act as agonists by shifting the voltage-dependence of activation to more hyperpolarized levels. Both natural (L-Thr form) and synthetic (D-Thr form) peptides cause paralysis and death following intracranial injection and grooming and hypersensitivity upon intraperitoneal injection into mice. The L-Thr form of the peptide is 7-fold more potent than the D-Thr form. Both natural peptide (L-Thr form) and synthetic peptide (D-Thr form) are active on nerve, and on muscle. The sequence is that of Iota-conotoxin-like r11d from Conus radiatus (Rayed cone).